We begin with the raw amino-acid sequence, 356 residues long: Fructose-1,6-bisphosphatase class 1 1 (356 aa).

4 residues coordinate Mg(2+): Glu-106, Asp-129, Leu-131, and Asp-132. Substrate-binding positions include 132 to 135, Asn-225, Tyr-258, and Lys-288; that span reads DGSS. Glu-294 lines the Mg(2+) pocket.

The protein belongs to the FBPase class 1 family. Homotetramer. Mg(2+) serves as cofactor.

Its subcellular location is the cytoplasm. The enzyme catalyses beta-D-fructose 1,6-bisphosphate + H2O = beta-D-fructose 6-phosphate + phosphate. It functions in the pathway carbohydrate biosynthesis; gluconeogenesis. The polypeptide is Fructose-1,6-bisphosphatase class 1 1 (Salinibacter ruber (strain DSM 13855 / M31)).